We begin with the raw amino-acid sequence, 335 residues long: Fructose-1,6-bisphosphatase class 1 (335 aa).

Residues Glu92, Asp114, Leu116, and Asp117 each coordinate Mg(2+). Residues 117 to 120 (DGSS), Asn209, and Lys275 each bind substrate. Glu281 serves as a coordination point for Mg(2+).

It belongs to the FBPase class 1 family. Homotetramer. Mg(2+) is required as a cofactor.

The protein resides in the cytoplasm. It carries out the reaction beta-D-fructose 1,6-bisphosphate + H2O = beta-D-fructose 6-phosphate + phosphate. It functions in the pathway carbohydrate biosynthesis; gluconeogenesis. This Verminephrobacter eiseniae (strain EF01-2) protein is Fructose-1,6-bisphosphatase class 1.